The following is an 865-amino-acid chain: Alanine--tRNA ligase (865 aa).

Residues His554, His558, Cys656, and His660 each coordinate Zn(2+).

This sequence belongs to the class-II aminoacyl-tRNA synthetase family. Zn(2+) is required as a cofactor.

It localises to the cytoplasm. The catalysed reaction is tRNA(Ala) + L-alanine + ATP = L-alanyl-tRNA(Ala) + AMP + diphosphate. In terms of biological role, catalyzes the attachment of alanine to tRNA(Ala) in a two-step reaction: alanine is first activated by ATP to form Ala-AMP and then transferred to the acceptor end of tRNA(Ala). Also edits incorrectly charged Ser-tRNA(Ala) and Gly-tRNA(Ala) via its editing domain. In Francisella tularensis subsp. mediasiatica (strain FSC147), this protein is Alanine--tRNA ligase.